An 84-amino-acid chain; its full sequence is Small ribosomal subunit protein uS17 (84 aa).

This sequence belongs to the universal ribosomal protein uS17 family. Part of the 30S ribosomal subunit.

Functionally, one of the primary rRNA binding proteins, it binds specifically to the 5'-end of 16S ribosomal RNA. This is Small ribosomal subunit protein uS17 from Clostridium perfringens (strain SM101 / Type A).